The sequence spans 880 residues: Valine--tRNA ligase (880 aa).

Positions 49 to 59 (PNVTGKLHLGH) match the 'HIGH' region motif. The 'KMSKS' region signature appears at 525-529 (KMSKS). Position 528 (K528) interacts with ATP. The stretch at 809-880 (LEGLINIDEE…VEKRIAELKN (72 aa)) forms a coiled coil.

This sequence belongs to the class-I aminoacyl-tRNA synthetase family. ValS type 1 subfamily. As to quaternary structure, monomer.

It localises to the cytoplasm. It catalyses the reaction tRNA(Val) + L-valine + ATP = L-valyl-tRNA(Val) + AMP + diphosphate. In terms of biological role, catalyzes the attachment of valine to tRNA(Val). As ValRS can inadvertently accommodate and process structurally similar amino acids such as threonine, to avoid such errors, it has a 'posttransfer' editing activity that hydrolyzes mischarged Thr-tRNA(Val) in a tRNA-dependent manner. This Bacillus licheniformis (strain ATCC 14580 / DSM 13 / JCM 2505 / CCUG 7422 / NBRC 12200 / NCIMB 9375 / NCTC 10341 / NRRL NRS-1264 / Gibson 46) protein is Valine--tRNA ligase.